The following is a 166-amino-acid chain: Large ribosomal subunit protein uL10 (166 aa).

Belongs to the universal ribosomal protein uL10 family. As to quaternary structure, part of the ribosomal stalk of the 50S ribosomal subunit. The N-terminus interacts with L11 and the large rRNA to form the base of the stalk. The C-terminus forms an elongated spine to which L12 dimers bind in a sequential fashion forming a multimeric L10(L12)X complex.

In terms of biological role, forms part of the ribosomal stalk, playing a central role in the interaction of the ribosome with GTP-bound translation factors. The chain is Large ribosomal subunit protein uL10 from Bacillus pumilus (strain SAFR-032).